Consider the following 92-residue polypeptide: Putative transition state regulator Abh (92 aa).

Residues 5–50 (GVVRKVDELGRIVMPIELRRALDIAIKDSIEFFVDGDKIILKKYKP) form the SpoVT-AbrB domain.

The protein to B.subtilis AbrB and SpoVT.

This is Putative transition state regulator Abh (abh) from Bacillus subtilis (strain 168).